The primary structure comprises 198 residues: Beta-crystallin A1-2 (198 aa).

Residues 1–13 are N-terminal arm; the sequence is MAQINPLPVPLGP. Beta/gamma crystallin 'Greek key' domains lie at 14 to 53 and 54 to 100; these read WKIT…KVEC and GAWI…RPIC. A connecting peptide region spans residues 101–106; that stretch reads SANHIE. 2 Beta/gamma crystallin 'Greek key' domains span residues 107 to 148 and 149 to 197; these read SKLV…KVQC and GAWV…RRIQ.

This sequence belongs to the beta/gamma-crystallin family. In terms of assembly, homo/heterodimer, or complexes of higher-order. The structure of beta-crystallin oligomers seems to be stabilized through interactions between the N-terminal arms. Post-translationally, the N-terminus is blocked.

Its function is as follows. Crystallins are the dominant structural components of the vertebrate eye lens. This Aquarana catesbeiana (American bullfrog) protein is Beta-crystallin A1-2.